We begin with the raw amino-acid sequence, 246 residues long: Thiamine import ATP-binding protein ThiQ (246 aa).

Positions 10 to 239 (VKLDALAFAY…QGPPAFARYL (230 aa)) constitute an ABC transporter domain. 41–48 (GPSGSGKS) provides a ligand contact to ATP.

It belongs to the ABC transporter superfamily. Thiamine importer (TC 3.A.1.19.1) family. As to quaternary structure, the complex is composed of two ATP-binding proteins (ThiQ), two transmembrane proteins (ThiP) and a solute-binding protein (ThiB).

The protein resides in the cell inner membrane. It catalyses the reaction thiamine(out) + ATP + H2O = thiamine(in) + ADP + phosphate + H(+). In terms of biological role, part of the ABC transporter complex ThiBPQ involved in thiamine import. Responsible for energy coupling to the transport system. In Chelativorans sp. (strain BNC1), this protein is Thiamine import ATP-binding protein ThiQ.